A 315-amino-acid chain; its full sequence is Transaldolase (315 aa).

Lys-125 (schiff-base intermediate with substrate) is an active-site residue.

The protein belongs to the transaldolase family. Type 1 subfamily. In terms of assembly, homodimer.

The protein localises to the cytoplasm. The catalysed reaction is D-sedoheptulose 7-phosphate + D-glyceraldehyde 3-phosphate = D-erythrose 4-phosphate + beta-D-fructose 6-phosphate. The protein operates within carbohydrate degradation; pentose phosphate pathway; D-glyceraldehyde 3-phosphate and beta-D-fructose 6-phosphate from D-ribose 5-phosphate and D-xylulose 5-phosphate (non-oxidative stage): step 2/3. Functionally, transaldolase is important for the balance of metabolites in the pentose-phosphate pathway. This is Transaldolase from Leptothrix cholodnii (strain ATCC 51168 / LMG 8142 / SP-6) (Leptothrix discophora (strain SP-6)).